The following is a 461-amino-acid chain: Cysteine--tRNA ligase (461 aa).

Cys-28 is a binding site for Zn(2+). Residues Ile-30–His-40 carry the 'HIGH' region motif. 3 residues coordinate Zn(2+): Cys-209, His-234, and Glu-238. Residues Lys-266 to Ser-270 carry the 'KMSKS' region motif. Lys-269 is a binding site for ATP.

Belongs to the class-I aminoacyl-tRNA synthetase family. Monomer. Requires Zn(2+) as cofactor.

The protein resides in the cytoplasm. The enzyme catalyses tRNA(Cys) + L-cysteine + ATP = L-cysteinyl-tRNA(Cys) + AMP + diphosphate. The protein is Cysteine--tRNA ligase of Shigella boydii serotype 18 (strain CDC 3083-94 / BS512).